Here is a 320-residue protein sequence, read N- to C-terminus: MDATACNESVDGSPVFYLLGIPSLPETFFLPVFFIFLLFYLLILMGNALILVAVVAEPSLHKPMYFFLINLSTLDILFTTTTVPKMLSLFLLGDRFLSFSSCLLQMYLFQSFTCSEAFILVVMAYDRYVAICHPLHYPVLMNPQTNATLAASAWLTALLLPIPAVVRTSQMAYNSIAYIYHCFCDHLAVVQASCSDTTPQTLMGFCIAMVVSFLPLLLVLLSYVHILASVLRISSLEGRAKAFSTCSSHLLVVGTYYSSIAIAYVAYRADLPLDFHIMGNVVYAILTPILNPLIYTLRNRDVKAAITKIMSQDPGCDRSI.

Residues 1–31 (MDATACNESVDGSPVFYLLGIPSLPETFFLP) lie on the Extracellular side of the membrane. The N-linked (GlcNAc...) asparagine glycan is linked to N7. A helical transmembrane segment spans residues 32–52 (VFFIFLLFYLLILMGNALILV). Topologically, residues 53–62 (AVVAEPSLHK) are cytoplasmic. Residues 63 to 83 (PMYFFLINLSTLDILFTTTTV) traverse the membrane as a helical segment. The Extracellular portion of the chain corresponds to 84-102 (PKMLSLFLLGDRFLSFSSC). Cysteines 102 and 184 form a disulfide. Residues 103 to 123 (LLQMYLFQSFTCSEAFILVVM) form a helical membrane-spanning segment. At 124-145 (AYDRYVAICHPLHYPVLMNPQT) the chain is on the cytoplasmic side. The helical transmembrane segment at 146–166 (NATLAASAWLTALLLPIPAVV) threads the bilayer. Residues 167-200 (RTSQMAYNSIAYIYHCFCDHLAVVQASCSDTTPQ) are Extracellular-facing. Residues 201 to 221 (TLMGFCIAMVVSFLPLLLVLL) traverse the membrane as a helical segment. Residues 222–245 (SYVHILASVLRISSLEGRAKAFST) lie on the Cytoplasmic side of the membrane. Residues 246 to 266 (CSSHLLVVGTYYSSIAIAYVA) traverse the membrane as a helical segment. At 267-276 (YRADLPLDFH) the chain is on the extracellular side. Residues 277 to 297 (IMGNVVYAILTPILNPLIYTL) traverse the membrane as a helical segment. Residues 298–320 (RNRDVKAAITKIMSQDPGCDRSI) are Cytoplasmic-facing.

It belongs to the G-protein coupled receptor 1 family. Detected in the keratinocytes of the epidermis (at protein level). Detected in hair follicles in proximal outer root sheath and hair matrix keratinocytes (at protein level).

The protein resides in the cell membrane. In terms of biological role, olfactory receptor. Activated by the synthetic sandalwood odorant sandalore. Endogenous ligand is unknown. The activity of this receptor is probably mediated by G proteins which induce elevation of intracellular Ca(2+), a cAMP-dependent pathway and phosphorylation of MAPK1/ERK2, MAPK3/ERK1 and p38 MAPKs. Activation of OR2AT4 induces proliferation, migration, and re-epithelialization during wound-healing processes of keratinocytes. Stimulation of OR2AT4 by sandalore promotes hair growth by decreasing apoptosis and increasing production of the anagen-prolonging growth factor IGF1 as well as other pathways involving various kinases. The polypeptide is Olfactory receptor 2AT4 (Homo sapiens (Human)).